Here is a 417-residue protein sequence, read N- to C-terminus: Serine hydroxymethyltransferase (417 aa).

Residues leucine 121 and 125–127 (GHL) each bind (6S)-5,6,7,8-tetrahydrofolate. Lysine 229 carries the post-translational modification N6-(pyridoxal phosphate)lysine. Residue 355-357 (SPF) participates in (6S)-5,6,7,8-tetrahydrofolate binding.

This sequence belongs to the SHMT family. As to quaternary structure, homodimer. Pyridoxal 5'-phosphate is required as a cofactor.

It is found in the cytoplasm. It catalyses the reaction (6R)-5,10-methylene-5,6,7,8-tetrahydrofolate + glycine + H2O = (6S)-5,6,7,8-tetrahydrofolate + L-serine. It participates in one-carbon metabolism; tetrahydrofolate interconversion. It functions in the pathway amino-acid biosynthesis; glycine biosynthesis; glycine from L-serine: step 1/1. Its function is as follows. Catalyzes the reversible interconversion of serine and glycine with tetrahydrofolate (THF) serving as the one-carbon carrier. This reaction serves as the major source of one-carbon groups required for the biosynthesis of purines, thymidylate, methionine, and other important biomolecules. Also exhibits THF-independent aldolase activity toward beta-hydroxyamino acids, producing glycine and aldehydes, via a retro-aldol mechanism. The protein is Serine hydroxymethyltransferase of Shewanella baltica (strain OS155 / ATCC BAA-1091).